We begin with the raw amino-acid sequence, 447 residues long: Argininosuccinate lyase (447 aa).

Belongs to the lyase 1 family. Argininosuccinate lyase subfamily.

The protein localises to the cytoplasm. It carries out the reaction 2-(N(omega)-L-arginino)succinate = fumarate + L-arginine. It functions in the pathway amino-acid biosynthesis; L-arginine biosynthesis; L-arginine from L-ornithine and carbamoyl phosphate: step 3/3. This is Argininosuccinate lyase from Bacteroides fragilis (strain YCH46).